We begin with the raw amino-acid sequence, 280 residues long: 2-dehydro-3-deoxyphosphooctonate aldolase (280 aa).

Belongs to the KdsA family.

Its subcellular location is the cytoplasm. The catalysed reaction is D-arabinose 5-phosphate + phosphoenolpyruvate + H2O = 3-deoxy-alpha-D-manno-2-octulosonate-8-phosphate + phosphate. The protein operates within carbohydrate biosynthesis; 3-deoxy-D-manno-octulosonate biosynthesis; 3-deoxy-D-manno-octulosonate from D-ribulose 5-phosphate: step 2/3. It participates in bacterial outer membrane biogenesis; lipopolysaccharide biosynthesis. The sequence is that of 2-dehydro-3-deoxyphosphooctonate aldolase from Neisseria meningitidis serogroup B (strain ATCC BAA-335 / MC58).